The following is a 288-amino-acid chain: 4-hydroxybenzoate octaprenyltransferase (288 aa).

The next 8 helical transmembrane spans lie at 23–43 (IGSLLLLWPTLWALWLAGRGI), 46–66 (AKILVVFVLGVFFMRAAGCVV), 98–118 (ILFVVLILLSFGLVLTLNSMT), 141–161 (LPQVVLGAAFGWSIPMGFAAV), 163–183 (ESLPLVCWLLLLANICWTVAY), 213–233 (LIIGLLQLATLLLMVAIGWLM), 234–254 (NLGGAFYWSILLAGALFTHQQ), and 268–288 (AFLNNNYVGLILFLGILISYW).

Belongs to the UbiA prenyltransferase family. Mg(2+) serves as cofactor.

The protein localises to the cell inner membrane. The catalysed reaction is all-trans-octaprenyl diphosphate + 4-hydroxybenzoate = 4-hydroxy-3-(all-trans-octaprenyl)benzoate + diphosphate. It participates in cofactor biosynthesis; ubiquinone biosynthesis. In terms of biological role, catalyzes the prenylation of para-hydroxybenzoate (PHB) with an all-trans polyprenyl group. Mediates the second step in the final reaction sequence of ubiquinone-8 (UQ-8) biosynthesis, which is the condensation of the polyisoprenoid side chain with PHB, generating the first membrane-bound Q intermediate 3-octaprenyl-4-hydroxybenzoate. The polypeptide is 4-hydroxybenzoate octaprenyltransferase (Yersinia pseudotuberculosis serotype O:1b (strain IP 31758)).